A 567-amino-acid polypeptide reads, in one-letter code: Dihydroxy-acid dehydratase 3 (567 aa).

A [2Fe-2S] cluster-binding site is contributed by Cys-57. A Mg(2+)-binding site is contributed by Asp-89. Cys-130 is a binding site for [2Fe-2S] cluster. The Mg(2+) site is built by Asp-131 and Lys-132. The residue at position 132 (Lys-132) is an N6-carboxylysine. Cys-202 serves as a coordination point for [2Fe-2S] cluster. Glu-454 contacts Mg(2+). Ser-480 serves as the catalytic Proton acceptor.

This sequence belongs to the IlvD/Edd family. As to quaternary structure, homodimer. [2Fe-2S] cluster is required as a cofactor. It depends on Mg(2+) as a cofactor.

It carries out the reaction (2R)-2,3-dihydroxy-3-methylbutanoate = 3-methyl-2-oxobutanoate + H2O. The enzyme catalyses (2R,3R)-2,3-dihydroxy-3-methylpentanoate = (S)-3-methyl-2-oxopentanoate + H2O. It participates in amino-acid biosynthesis; L-isoleucine biosynthesis; L-isoleucine from 2-oxobutanoate: step 3/4. It functions in the pathway amino-acid biosynthesis; L-valine biosynthesis; L-valine from pyruvate: step 3/4. In terms of biological role, functions in the biosynthesis of branched-chain amino acids. Catalyzes the dehydration of (2R,3R)-2,3-dihydroxy-3-methylpentanoate (2,3-dihydroxy-3-methylvalerate) into 2-oxo-3-methylpentanoate (2-oxo-3-methylvalerate) and of (2R)-2,3-dihydroxy-3-methylbutanoate (2,3-dihydroxyisovalerate) into 2-oxo-3-methylbutanoate (2-oxoisovalerate), the penultimate precursor to L-isoleucine and L-valine, respectively. In Aromatoleum aromaticum (strain DSM 19018 / LMG 30748 / EbN1) (Azoarcus sp. (strain EbN1)), this protein is Dihydroxy-acid dehydratase 3.